Reading from the N-terminus, the 419-residue chain is CinA-like protein (419 aa).

This sequence belongs to the CinA family.

The chain is CinA-like protein from Acaryochloris marina (strain MBIC 11017).